The following is a 105-amino-acid chain: Platelet factor 4 (105 aa).

Positions 1-29 (MSAAAVFRGLRPSPELLLLGLLLLPAVVA) are cleaved as a signal peptide. T31 carries an O-linked (GalNAc...) threonine; partial glycan. 2 disulfides stabilise this stretch: C44–C71 and C46–C87. S61 bears the Phosphoserine mark. A heparin-binding site is contributed by 96–102 (KKIIKKL).

The protein belongs to the intercrine alpha (chemokine CxC) family. In terms of assembly, homotetramer. Interacts with TNFAIP6 (via Link domain). Interacts with CCR1. Interacts with CXCR3. Interacts with THBD; this interaction enhances generation of activated protein C. In terms of processing, O-linked glycan consists of Gal-GalNAc disaccharide which is modified with sialic acid residues (microheterogeneity).

It localises to the secreted. Its function is as follows. Chemokine released during platelet aggregation that plays a role in different biological processes including hematopoiesis, cell proliferation, differentiation, and activation. Acts via different functional receptors including CCR1, CXCR3A or CXCR3B. Upon interaction with CXCR3A receptor, induces activated T-lymphocytes migration mediated via downstream Ras/extracellular signal-regulated kinase (ERK) signaling. Neutralizes the anticoagulant effect of heparin by binding more strongly to heparin than to the chondroitin-4-sulfate chains of the carrier molecule. Plays a role in the inhibition of hematopoiesis and in the maintenance of hematopoietic stem cell (HSC) quiescence. Chemotactic for neutrophils and monocytes via CCR1. Inhibits endothelial cell proliferation. In cooperation with toll-like receptor 8/TLR8, induces chromatin remodeling and activates inflammatory gene expression via the TBK1-IRF5 axis. In addition, induces myofibroblast differentiation and collagen synthesis in different precursor cells, including endothelial cells, by stimulating endothelial-to-mesenchymal transition. Interacts with thrombomodulin/THBD to enhance the activation of protein C and thus potentiates its anticoagulant activity. This Rattus norvegicus (Rat) protein is Platelet factor 4 (Pf4).